A 785-amino-acid polypeptide reads, in one-letter code: MATTHAPAEPPKRRRIGVLTSGGDAPGMNGAVRAVVRMAIYSGCEAYAVYEGYEGLVHGGDMIRQVHWEDVRGWLSRGGTLIGSARSMAFRERAGRLKAAKNMIVRGIDALVVCGGDGSLTGADLFRSEWPGLLEELVKTGELTEEQIVPYKVLNIVGLVGSIDNDMSGTDATIGCYSSLTRICDAVDDVFDTAYSHQRGFVIEVMGRHCGWLALMSAISTGADWLFIPEMPPREGWEDDMCDIITKNRQERGKRRTIVIVAEGAHDRQLNKITSSKIKDILTNRLDLDTRVTVLGHTQRGGAACAYDRTLSTLQGVEAVRAVLDMTPESPSPVITVRENKLLRTPLMDAVKATKEVADLIHERKFDEAMHLRDSEFKEYHFAYKNTATPDHPKLILPENKRMRIAIIHVGAPAGGMNQATRAAVAYCQTRGHTALAVHNGFPGLCRHHADTPVSSVREVSWEEQDTWVNEGGSDIGTNRSLPSEDFETTAKCFEKFKFDGLFVVGGFEAFTAVSQLRQAREKYPAFKIPMVVLPATISNNVPGTEYSLGSDTCLNTLIDFCDAIRQSASSSRRRVFVVETQGGKSGYVATTAGLAVGASAVYIPEEGIDIKMLARDIDFLRNNFAHDKGANRAGKIILRNETASSTYTTQVIADMIKEEAKGRFESRAAVPGHFQQGGKPSPMDRIRALRMAIRCMQHIETFSGKSADEIAADELSATVIGVKGSQVLFSQMGGPNGLEATETDWARRRPKDEFWLDLQSTVNILSGRASFGEGKTGWSCYENC.

The N-terminal catalytic PFK domain 1 stretch occupies residues 1–389 (MATTHAPAEP…YHFAYKNTAT (389 aa)). ATP-binding positions include Gly23, 86 to 87 (RS), and 116 to 119 (GDGS). Position 117 (Asp117) interacts with Mg(2+). Residues 162–164 (SID), Arg199, 206–208 (MGR), Glu263, Arg291, and 297–300 (HTQR) each bind substrate. The Proton acceptor role is filled by Asp164. The tract at residues 390 to 403 (PDHPKLILPENKRM) is interdomain linker. The segment at 404 to 785 (RIAIIHVGAP…KTGWSCYENC (382 aa)) is C-terminal regulatory PFK domain 2. Residues Arg480, 537-541 (TISNN), Arg575, 582-584 (QGG), Glu642, Arg668, 674-677 (HFQQ), and Arg749 contribute to the beta-D-fructose 2,6-bisphosphate site.

It belongs to the phosphofructokinase type A (PFKA) family. ATP-dependent PFK group I subfamily. Eukaryotic two domain clade 'E' sub-subfamily. In terms of assembly, homotetramer. It depends on Mg(2+) as a cofactor.

It localises to the cytoplasm. It catalyses the reaction beta-D-fructose 6-phosphate + ATP = beta-D-fructose 1,6-bisphosphate + ADP + H(+). It participates in carbohydrate degradation; glycolysis; D-glyceraldehyde 3-phosphate and glycerone phosphate from D-glucose: step 3/4. Its activity is regulated as follows. Allosterically activated by ADP, AMP, or fructose 2,6-bisphosphate, and allosterically inhibited by ATP or citrate. Its function is as follows. Catalyzes the phosphorylation of D-fructose 6-phosphate to fructose 1,6-bisphosphate by ATP, the first committing step of glycolysis. The chain is ATP-dependent 6-phosphofructokinase 1 (pfkA) from Aspergillus oryzae (strain ATCC 42149 / RIB 40) (Yellow koji mold).